We begin with the raw amino-acid sequence, 298 residues long: Probable endonuclease 4 (298 aa).

Zn(2+) contacts are provided by histidine 69, histidine 111, glutamate 146, aspartate 180, histidine 183, histidine 215, aspartate 228, histidine 230, and glutamate 260.

This sequence belongs to the AP endonuclease 2 family. Zn(2+) serves as cofactor.

It catalyses the reaction Endonucleolytic cleavage to 5'-phosphooligonucleotide end-products.. Its function is as follows. Endonuclease IV plays a role in DNA repair. It cleaves phosphodiester bonds at apurinic or apyrimidinic (AP) sites, generating a 3'-hydroxyl group and a 5'-terminal sugar phosphate. This chain is Probable endonuclease 4, found in Bacillus cereus (strain AH187).